The chain runs to 130 residues: Small ribosomal subunit protein uS8 (130 aa).

The protein belongs to the universal ribosomal protein uS8 family. In terms of assembly, part of the 30S ribosomal subunit. Contacts proteins S5 and S12.

Functionally, one of the primary rRNA binding proteins, it binds directly to 16S rRNA central domain where it helps coordinate assembly of the platform of the 30S subunit. The sequence is that of Small ribosomal subunit protein uS8 from Buchnera aphidicola subsp. Baizongia pistaciae (strain Bp).